Consider the following 317-residue polypeptide: Putative AP2/ERF and B3 domain-containing protein Os01g0140700 (317 aa).

The tract at residues 1–37 is disordered; sequence MEQEAAMVVFSCNSGSGGSSSTTDSKQEEEEEEELAA. Acidic residues predominate over residues 27 to 37; that stretch reads QEEEEEEELAA. Residues 66–121 constitute a DNA-binding region (AP2/ERF); sequence RYKGVVPQPNGRWGAQIYERHARVWLGTFPDEEAAARAYDVAALRFRGRDAVTNRA. The segment at residues 178 to 287 is a DNA-binding region (TF-B3); it reads FEKAVTPSDV…EKHLLIDCKK (110 aa).

Its subcellular location is the nucleus. The protein is Putative AP2/ERF and B3 domain-containing protein Os01g0140700 of Oryza sativa subsp. japonica (Rice).